Consider the following 515-residue polypeptide: Glucose-6-phosphate 1-dehydrogenase (515 aa).

The NADP(+) site is built by arginine 53 and lysine 160. Substrate contacts are provided by histidine 190, lysine 194, glutamate 228, and aspartate 247. Histidine 252 acts as the Proton acceptor in catalysis. A substrate-binding site is contributed by lysine 352.

The protein belongs to the glucose-6-phosphate dehydrogenase family.

The catalysed reaction is D-glucose 6-phosphate + NADP(+) = 6-phospho-D-glucono-1,5-lactone + NADPH + H(+). Its pathway is carbohydrate degradation; pentose phosphate pathway; D-ribulose 5-phosphate from D-glucose 6-phosphate (oxidative stage): step 1/3. Catalyzes the oxidation of glucose 6-phosphate to 6-phosphogluconolactone. This Treponema pallidum (strain Nichols) protein is Glucose-6-phosphate 1-dehydrogenase.